A 165-amino-acid polypeptide reads, in one-letter code: Cyclic pyranopterin monophosphate synthase (165 aa).

Substrate is bound by residues 83–85 (FCH) and 120–121 (ME). Residue D135 is part of the active site.

Belongs to the MoaC family. As to quaternary structure, homohexamer; trimer of dimers.

It carries out the reaction (8S)-3',8-cyclo-7,8-dihydroguanosine 5'-triphosphate = cyclic pyranopterin phosphate + diphosphate. It participates in cofactor biosynthesis; molybdopterin biosynthesis. Functionally, catalyzes the conversion of (8S)-3',8-cyclo-7,8-dihydroguanosine 5'-triphosphate to cyclic pyranopterin monophosphate (cPMP). This is Cyclic pyranopterin monophosphate synthase from Xanthomonas axonopodis pv. citri (strain 306).